The following is a 182-amino-acid chain: Adenine phosphoribosyltransferase (182 aa).

The protein belongs to the purine/pyrimidine phosphoribosyltransferase family. Homodimer.

The protein resides in the cytoplasm. The enzyme catalyses AMP + diphosphate = 5-phospho-alpha-D-ribose 1-diphosphate + adenine. It functions in the pathway purine metabolism; AMP biosynthesis via salvage pathway; AMP from adenine: step 1/1. In terms of biological role, catalyzes a salvage reaction resulting in the formation of AMP, that is energically less costly than de novo synthesis. The polypeptide is Adenine phosphoribosyltransferase (Streptomyces avermitilis (strain ATCC 31267 / DSM 46492 / JCM 5070 / NBRC 14893 / NCIMB 12804 / NRRL 8165 / MA-4680)).